We begin with the raw amino-acid sequence, 294 residues long: Probable enoyl-CoA hydratase echA12 (294 aa).

This sequence belongs to the enoyl-CoA hydratase/isomerase family.

The enzyme catalyses a (3S)-3-hydroxyacyl-CoA = a (2E)-enoyl-CoA + H2O. It catalyses the reaction a 4-saturated-(3S)-3-hydroxyacyl-CoA = a (3E)-enoyl-CoA + H2O. In terms of biological role, could possibly oxidize fatty acids using specific components. The protein is Probable enoyl-CoA hydratase echA12 (echA12) of Mycobacterium leprae (strain TN).